The sequence spans 79 residues: Gene 68 protein (79 aa).

A disordered region spans residues 58 to 79 (ETHAARAGRPIHDALIDPKKVK).

The sequence is that of Gene 68 protein (68) from Mycobacterium (Mycobacteriophage L5).